The following is a 41-amino-acid chain: uncharacterized protein (41 aa).

This is an uncharacterized protein from Rickettsia prowazekii (strain Madrid E).